The sequence spans 304 residues: N-acetylmuramic acid 6-phosphate etherase (304 aa).

Residues Ile58–Lys221 form the SIS domain. The active-site Proton donor is Glu86. Glu117 is an active-site residue.

This sequence belongs to the GCKR-like family. MurNAc-6-P etherase subfamily. In terms of assembly, homodimer.

The catalysed reaction is N-acetyl-D-muramate 6-phosphate + H2O = N-acetyl-D-glucosamine 6-phosphate + (R)-lactate. The protein operates within amino-sugar metabolism; N-acetylmuramate degradation. In terms of biological role, specifically catalyzes the cleavage of the D-lactyl ether substituent of MurNAc 6-phosphate, producing GlcNAc 6-phosphate and D-lactate. The chain is N-acetylmuramic acid 6-phosphate etherase from Clostridioides difficile (strain 630) (Peptoclostridium difficile).